A 182-amino-acid chain; its full sequence is Tropomyosin-like protein (182 aa).

The stretch at 1–68 forms a coiled coil; that stretch reads FDRYNQILDE…ELEQRRTEQQ (68 aa). Residues 32–66 are compositionally biased toward basic and acidic residues; that stretch reads DEETKKIKQEEAEMKKKIEGEASRKKLELEQRRTE. Disordered regions lie at residues 32-81 and 140-160; these read DEET…GSTD and DQPA…DAGL. A compositionally biased stretch (low complexity) spans 140-153; sequence DQPAQAGPEPAAPA.

Its subcellular location is the cytoplasm. It is found in the cytoskeleton. The sequence is that of Tropomyosin-like protein from Pichia angusta (Yeast).